The following is a 269-amino-acid chain: Putative phosphatase M6_Spy0533 (269 aa).

Catalysis depends on Asp-9, which acts as the Nucleophile. Asp-9 lines the Mg(2+) pocket. Position 10 (Ile-10) interacts with phosphate. Residue Asp-11 coordinates Mg(2+). Residues 43 to 44 and Lys-196 each bind phosphate; that span reads TG. Position 219 (Asp-219) interacts with Mg(2+). Asn-222 contributes to the phosphate binding site.

Requires Mg(2+) as cofactor.

The polypeptide is Putative phosphatase M6_Spy0533 (Streptococcus pyogenes serotype M6 (strain ATCC BAA-946 / MGAS10394)).